A 766-amino-acid chain; its full sequence is Serine/threonine-protein kinase PKH1 (766 aa).

Positions 1–52 (MGNRSLTEADHALLSKPLVPTSAEHTQTQEYPRPFVDGSNSQSGSELQASPQ) are disordered. The segment covering 38–52 (GSNSQSGSELQASPQ) has biased composition (polar residues). The 267-residue stretch at 125–391 (FKFGEQLGDG…IKQIKAHLFF (267 aa)) folds into the Protein kinase domain. ATP is bound by residues 135–137 (SYS) and lysine 154. Positions 156-201 (LSKEYLIRQKKVKYVTVEKLALQKLNGTKGIFKLFFTFQDEASLYF) are PIF-pocket. ATP is bound by residues 204–206 (EYA) and aspartate 210. Residue aspartate 249 is the Proton acceptor of the active site. Positions 253 and 267 each coordinate ATP. Phosphoserine occurs at positions 294 and 296. The span at 476-495 (TSQPKLGSKSSTSVRSASNN) shows a compositional bias: polar residues. Disordered regions lie at residues 476-529 (TSQP…NRSR) and 725-745 (PEEG…SSSN). A compositionally biased stretch (low complexity) spans 511–521 (SVSSPSISTTS). Residues 735–745 (PTSLQTRSSSN) show a composition bias toward polar residues.

Belongs to the protein kinase superfamily. AGC Ser/Thr protein kinase family. PDPK1 subfamily.

It carries out the reaction L-seryl-[protein] + ATP = O-phospho-L-seryl-[protein] + ADP + H(+). The enzyme catalyses L-threonyl-[protein] + ATP = O-phospho-L-threonyl-[protein] + ADP + H(+). Its function is as follows. Activates YPK1 by phosphorylating of a threonine residue. The sequence is that of Serine/threonine-protein kinase PKH1 (PKH1) from Saccharomyces cerevisiae (strain ATCC 204508 / S288c) (Baker's yeast).